A 457-amino-acid polypeptide reads, in one-letter code: Argininosuccinate lyase (457 aa).

Belongs to the lyase 1 family. Argininosuccinate lyase subfamily.

The protein localises to the cytoplasm. The catalysed reaction is 2-(N(omega)-L-arginino)succinate = fumarate + L-arginine. It participates in amino-acid biosynthesis; L-arginine biosynthesis; L-arginine from L-ornithine and carbamoyl phosphate: step 3/3. The polypeptide is Argininosuccinate lyase (Psychrobacter arcticus (strain DSM 17307 / VKM B-2377 / 273-4)).